Here is a 196-residue protein sequence, read N- to C-terminus: Small ribosomal subunit protein uS4c (196 aa).

The disordered stretch occupies residues 15–41; the sequence is LGALPGLTSKRPRSGSDLKNPLRSGKR. The 62-residue stretch at 89–150 folds into the S4 RNA-binding domain; it reads MRLDNILFRL…KQRSKALIQN (62 aa).

This sequence belongs to the universal ribosomal protein uS4 family. Part of the 30S ribosomal subunit. Contacts protein S5. The interaction surface between S4 and S5 is involved in control of translational fidelity.

Its subcellular location is the plastid. The protein resides in the chloroplast. Its function is as follows. One of the primary rRNA binding proteins, it binds directly to 16S rRNA where it nucleates assembly of the body of the 30S subunit. In terms of biological role, with S5 and S12 plays an important role in translational accuracy. The sequence is that of Small ribosomal subunit protein uS4c (rps4) from Narcissus odorus (Campernelle jonquil).